We begin with the raw amino-acid sequence, 196 residues long: Holliday junction branch migration complex subunit RuvA (196 aa).

A domain I region spans residues 1-63; sequence MINKIHGKVI…ENELKLFGFL (63 aa). The interval 64-139 is domain II; sequence NSDERETFKS…KLLINNELES (76 aa). S139 is a region of interest (flexible linker). The segment at 139 to 196 is domain III; it reads SSLFGFKELEESIVSMGFDRKIVNSKLKEACDLIEFSNLKDSEKEQFLFKEVLKRMSN.

It belongs to the RuvA family. Homotetramer. Forms an RuvA(8)-RuvB(12)-Holliday junction (HJ) complex. HJ DNA is sandwiched between 2 RuvA tetramers; dsDNA enters through RuvA and exits via RuvB. An RuvB hexamer assembles on each DNA strand where it exits the tetramer. Each RuvB hexamer is contacted by two RuvA subunits (via domain III) on 2 adjacent RuvB subunits; this complex drives branch migration. In the full resolvosome a probable DNA-RuvA(4)-RuvB(12)-RuvC(2) complex forms which resolves the HJ.

Its subcellular location is the cytoplasm. Functionally, the RuvA-RuvB-RuvC complex processes Holliday junction (HJ) DNA during genetic recombination and DNA repair, while the RuvA-RuvB complex plays an important role in the rescue of blocked DNA replication forks via replication fork reversal (RFR). RuvA specifically binds to HJ cruciform DNA, conferring on it an open structure. The RuvB hexamer acts as an ATP-dependent pump, pulling dsDNA into and through the RuvAB complex. HJ branch migration allows RuvC to scan DNA until it finds its consensus sequence, where it cleaves and resolves the cruciform DNA. The sequence is that of Holliday junction branch migration complex subunit RuvA from Borrelia garinii subsp. bavariensis (strain ATCC BAA-2496 / DSM 23469 / PBi) (Borreliella bavariensis).